A 153-amino-acid chain; its full sequence is Lipoprotein signal peptidase (153 aa).

3 consecutive transmembrane segments (helical) span residues 6–26 (IVAV…SYIV), 60–80 (QQLL…WYLH), and 85–105 (DSFW…GNFI). Catalysis depends on residues D115 and D131. A helical transmembrane segment spans residues 124–144 (FAIFNVADSYLTVGVIILLIA).

This sequence belongs to the peptidase A8 family.

The protein resides in the cell membrane. The catalysed reaction is Release of signal peptides from bacterial membrane prolipoproteins. Hydrolyzes -Xaa-Yaa-Zaa-|-(S,diacylglyceryl)Cys-, in which Xaa is hydrophobic (preferably Leu), and Yaa (Ala or Ser) and Zaa (Gly or Ala) have small, neutral side chains.. The protein operates within protein modification; lipoprotein biosynthesis (signal peptide cleavage). This protein specifically catalyzes the removal of signal peptides from prolipoproteins. The protein is Lipoprotein signal peptidase of Streptococcus pneumoniae (strain ATCC BAA-255 / R6).